A 255-amino-acid chain; its full sequence is Complement C1q-like protein 3 (255 aa).

The signal sequence occupies residues 1 to 20 (MVLLLVILIPVLVSSAGTSA). A disordered region spans residues 39-109 (KAPSTAATPD…GLPGPPGAPG (71 aa)). The Collagen-like domain occupies 61 to 111 (GPKGEAGRPGKAGPRGPPGEPGPPGPMGPPGEKGEPGRQGLPGPPGAPGLN). Residues 75 to 89 (RGPPGEPGPPGPMGP) are compositionally biased toward pro residues. In terms of domain architecture, C1q spans 122 to 255 (STVPKIAFYA…TFSGFIIYAD (134 aa)).

As to quaternary structure, forms homooligomers. Interacts with ADGRB3. Interacts with C1QL2 and C1QL4, when proteins are coexpressed; this interaction does not occur after secretion. In terms of tissue distribution, highly expressed in adipose tissue, with expression levels at least 2 orders of magnitude higher than in other tissues, including brain and kidney.

It localises to the secreted. In terms of biological role, may regulate the number of excitatory synapses that are formed on hippocampus neurons. Has no effect on inhibitory synapses. Plays a role in glucose homeostasis. Via AMPK signaling pathway, stimulates glucose uptake in adipocytes, myotubes and hepatocytes and enhances insulin-stimulated glucose uptake. In a hepatoma cell line, reduces the expression of gluconeogenic enzymes G6PC1 and PCK1 and hence decreases de novo glucose production. In Homo sapiens (Human), this protein is Complement C1q-like protein 3 (C1QL3).